A 385-amino-acid chain; its full sequence is Exopolygalacturonase rpg16 (385 aa).

The signal sequence occupies residues 1 to 26 (MVRFTSFTSPFSAILLLSFGINKVAT). N-linked (GlcNAc...) asparagine glycans are attached at residues Asn-143, Asn-161, Asn-164, and Asn-180. Residues 165–195 (STNLLLHDFIIHTVSNNSNPAKNTDALDLYH) form a PbH1 1 repeat. Residue Asp-210 is the Proton donor of the active site. Cys-212 and Cys-229 form a disulfide bridge. N-linked (GlcNAc...) asparagine glycosylation is found at Asn-218 and Asn-226. PbH1 repeat units follow at residues 219-241 (VTKVTVSNITCRGGHGYSIGSLG), 249-270 (VTQVNVYNSTCIDCQNGVRVKT), and 278-299 (VEDINFTDIYLEKAENPIIITT). His-233 is an active-site residue. N-linked (GlcNAc...) asparagine glycans are attached at residues Asn-256, Asn-282, and Asn-343. A disulfide bridge connects residues Cys-344 and Cys-350. A PbH1 5 repeat occupies 350 to 376 (CSDVTLTNINISKASNNTKNVCVNLKG). 2 N-linked (GlcNAc...) asparagine glycosylation sites follow: Asn-359 and Asn-365.

Belongs to the glycosyl hydrolase 28 family. N-glycosylated.

The protein resides in the secreted. It catalyses the reaction [(1-&gt;4)-alpha-D-galacturonosyl](n) + H2O = alpha-D-galacturonate + [(1-&gt;4)-alpha-D-galacturonosyl](n-1). Specific in hydrolyzing the terminal glycosidic bond of polygalacturonic acid and oligogalacturonates. The sequence is that of Exopolygalacturonase rpg16 from Rhizopus delemar (strain RA 99-880 / ATCC MYA-4621 / FGSC 9543 / NRRL 43880) (Mucormycosis agent).